Here is a 506-residue protein sequence, read N- to C-terminus: Anaerobic nitric oxide reductase transcription regulator NorR (506 aa).

Aspartate 57 is modified (4-aspartylphosphate). Positions 187–416 (MIGLSPAMTQ…LEHAIHRAVV (230 aa)) constitute a Sigma-54 factor interaction domain. Residues 215-222 (GETGTGKE) and 278-287 (ADNGTLFLDE) contribute to the ATP site. The H-T-H motif DNA-binding region spans 481–500 (WAASARALETDVANLHRLAK).

It functions in the pathway nitrogen metabolism; nitric oxide reduction. Functionally, required for the expression of anaerobic nitric oxide (NO) reductase, acts as a transcriptional activator for at least the norVW operon. Activation also requires sigma-54. The sequence is that of Anaerobic nitric oxide reductase transcription regulator NorR from Salmonella gallinarum (strain 287/91 / NCTC 13346).